Here is a 718-residue protein sequence, read N- to C-terminus: Pentatricopeptide repeat-containing protein At1g22960, mitochondrial (718 aa).

The transit peptide at 1–11 (MILCLRLCLRA) directs the protein to the mitochondrion. 15 PPR repeats span residues 167–201 (ALKL…GFLP), 202–236 (SVRN…GIMP), 237–271 (TVIT…NIEF), 272–306 (SEVT…GFAV), 307–341 (TPYS…GIYP), 342–372 (TTST…MAAP), 373–407 (DVVS…DIHP), 408–442 (SIVT…LIFP), 443–477 (DVIT…GIKP), 478–512 (DGYA…DHHA), 514–548 (DLTI…GLVP), 549–583 (DHVT…RLYP), 584–618 (SVIT…GVRP), 619–653 (NVMT…GIPP), and 654–688 (NKYS…EIEP).

This sequence belongs to the PPR family. P subfamily.

It is found in the mitochondrion. This chain is Pentatricopeptide repeat-containing protein At1g22960, mitochondrial, found in Arabidopsis thaliana (Mouse-ear cress).